The sequence spans 290 residues: Proteasome subunit beta (290 aa).

The propeptide at 1-58 is removed in mature form; by autocatalysis; the sequence is MTTSGGLTGPGAFGRLPQPFHQPGITSFVEFLALQAPDLLPGRLQMPAGGQPPEVPHG. Threonine 59 acts as the Nucleophile in catalysis.

It belongs to the peptidase T1B family. In terms of assembly, the 20S proteasome core is composed of 14 alpha and 14 beta subunits that assemble into four stacked heptameric rings, resulting in a barrel-shaped structure. The two inner rings, each composed of seven catalytic beta subunits, are sandwiched by two outer rings, each composed of seven alpha subunits. The catalytic chamber with the active sites is on the inside of the barrel. Has a gated structure, the ends of the cylinder being occluded by the N-termini of the alpha-subunits. Is capped by the proteasome-associated ATPase, ARC.

The protein resides in the cytoplasm. It carries out the reaction Cleavage of peptide bonds with very broad specificity.. It participates in protein degradation; proteasomal Pup-dependent pathway. Its activity is regulated as follows. The formation of the proteasomal ATPase ARC-20S proteasome complex, likely via the docking of the C-termini of ARC into the intersubunit pockets in the alpha-rings, may trigger opening of the gate for substrate entry. Interconversion between the open-gate and close-gate conformations leads to a dynamic regulation of the 20S proteasome proteolysis activity. Component of the proteasome core, a large protease complex with broad specificity involved in protein degradation. The polypeptide is Proteasome subunit beta (Acidothermus cellulolyticus (strain ATCC 43068 / DSM 8971 / 11B)).